Here is a 474-residue protein sequence, read N- to C-terminus: Gamma-aminobutyric acid receptor subunit gamma-2 (474 aa).

An N-terminal signal peptide occupies residues 1–38 (MSSPNTWSIGSSVYSPVFSQKMTLWILLLLSLYPGFTS). The Extracellular portion of the chain corresponds to 39 to 274 (QKSDDDYEDY…FDLSRRMGYF (236 aa)). Residues Asn-51 and Asn-128 are each glycosylated (N-linked (GlcNAc...) asparagine). A disulfide bridge connects residues Cys-189 and Cys-203. The N-linked (GlcNAc...) asparagine glycan is linked to Asn-246. A helical transmembrane segment spans residues 275–295 (TIQTYIPCTLIVVLSWVSFWI). Topologically, residues 296–301 (NKDAVP) are cytoplasmic. A helical transmembrane segment spans residues 302 to 321 (ARTSLGITTVLTMTTLSTIA). The Extracellular segment spans residues 322–333 (RKSLPKVSYVTA). The chain crosses the membrane as a helical span at residues 334 to 358 (MDLFVSVCFIFVFSALVEYGTLHYF). At 359–450 (VSNRKPSKDK…IHIRIAKMDS (92 aa)) the chain is on the cytoplasmic side. A Phosphoserine; by PKC modification is found at Ser-381. The chain crosses the membrane as a helical span at residues 451-472 (YARIFFPTAFCLFNLVYWVSYL). At 473–474 (YL) the chain is on the extracellular side.

Belongs to the ligand-gated ion channel (TC 1.A.9) family. Gamma-aminobutyric acid receptor (TC 1.A.9.5) subfamily. GABRG2 sub-subfamily. In terms of assembly, heteropentamer, formed by a combination of alpha (GABRA1-6), beta (GABRB1-3), gamma (GABRG1-3), delta (GABRD), epsilon (GABRE), rho (GABRR1-3), pi (GABRP) and theta (GABRQ) chains, each subunit exhibiting distinct physiological and pharmacological properties. Interacts with GABARAP. Interacts with KIF21B. Identified in a complex of 720 kDa composed of LHFPL4, NLGN2, GABRA1, GABRB2, GABRG2 and GABRB3. Interacts with LHFPL4. Interacts with SHISA7; interaction leads to the regulation of GABA(A) receptor trafficking, channel deactivation kinetics and pharmacology. In terms of processing, glycosylated. Post-translationally, palmitoylated by ZDHHC3/GODZ; required for the accumulation of GABA(A) receptors at the postsynaptic membrane of inhibitory GABAergic synapses. In terms of tissue distribution, expressed in brain neurons (at protein level).

The protein resides in the postsynaptic cell membrane. Its subcellular location is the cell membrane. The protein localises to the cell projection. It is found in the dendrite. It localises to the cytoplasmic vesicle membrane. It catalyses the reaction chloride(in) = chloride(out). With respect to regulation, allosterically activated by benzodiazepines. Activated by pentobarbital. Inhibited by the antagonist bicuculline. Inhibited by zinc ions. Potentiated by histamine. In terms of biological role, gamma subunit of the heteropentameric ligand-gated chloride channel gated by gamma-aminobutyric acid (GABA), a major inhibitory neurotransmitter in the brain. GABA-gated chloride channels, also named GABA(A) receptors (GABAAR), consist of five subunits arranged around a central pore and contain GABA active binding site(s) located at the alpha and beta subunit interface(s). When activated by GABA, GABAARs selectively allow the flow of chloride anions across the cell membrane down their electrochemical gradient. Gamma-2/GABRG2-containing GABAARs are found at both synaptic and extrasynaptic sites. Chloride influx into the postsynaptic neuron following GABAAR opening decreases the neuron ability to generate a new action potential, thereby reducing nerve transmission. GABAARs containing alpha-1 and beta-2 or -3 subunits exhibit synaptogenic activity; the gamma-2 subunit being necessary but not sufficient to induce rapid synaptic contacts formation. Extrasynaptic gamma-2-containing receptors contribute to the tonic GABAergic inhibition. GABAARs function also as histamine receptor where histamine binds at the interface of two neighboring beta subunits and potentiates GABA response in a gamma-2 subunit-controlled manner. The protein is Gamma-aminobutyric acid receptor subunit gamma-2 of Mus musculus (Mouse).